Here is a 217-residue protein sequence, read N- to C-terminus: Putative oxidative stress regulator AosR (217 aa).

Residues 5-9 carry the CXXXC motif; it reads CGRRC. Residues C5 and C9 are joined by a disulfide bond.

Belongs to the AosR family.

The chain is Putative oxidative stress regulator AosR from Mycobacterium leprae (strain TN).